The following is a 299-amino-acid chain: Putative hydrolase YtaP (299 aa).

It belongs to the dienelactone hydrolase family.

This chain is Putative hydrolase YtaP (ytaP), found in Bacillus subtilis (strain 168).